We begin with the raw amino-acid sequence, 407 residues long: Ornithine cyclodeaminase (407 aa).

Residues Asn-233, Ala-234, Asp-312, Thr-344, Met-345, Leu-346, His-347, Asp-365, Asp-388, and Val-389 each contribute to the NAD(+) site.

Belongs to the AgrE/ArgZ ornithine cyclodeaminase family. Requires NAD(+) as cofactor.

It carries out the reaction L-ornithine = L-proline + NH4(+). Its function is as follows. Catalyzes the conversion of ornithine to proline, with the release of ammonia. The polypeptide is Ornithine cyclodeaminase (Archaeoglobus fulgidus (strain ATCC 49558 / DSM 4304 / JCM 9628 / NBRC 100126 / VC-16)).